A 90-amino-acid polypeptide reads, in one-letter code: Small ribosomal subunit protein uS17 (90 aa).

Belongs to the universal ribosomal protein uS17 family. As to quaternary structure, part of the 30S ribosomal subunit.

Functionally, one of the primary rRNA binding proteins, it binds specifically to the 5'-end of 16S ribosomal RNA. The sequence is that of Small ribosomal subunit protein uS17 from Burkholderia cenocepacia (strain ATCC BAA-245 / DSM 16553 / LMG 16656 / NCTC 13227 / J2315 / CF5610) (Burkholderia cepacia (strain J2315)).